The chain runs to 513 residues: ATP synthase subunit alpha (513 aa).

169-176 (GDRQIGKT) provides a ligand contact to ATP.

Belongs to the ATPase alpha/beta chains family. In terms of assembly, F-type ATPases have 2 components, CF(1) - the catalytic core - and CF(0) - the membrane proton channel. CF(1) has five subunits: alpha(3), beta(3), gamma(1), delta(1), epsilon(1). CF(0) has three main subunits: a(1), b(2) and c(9-12). The alpha and beta chains form an alternating ring which encloses part of the gamma chain. CF(1) is attached to CF(0) by a central stalk formed by the gamma and epsilon chains, while a peripheral stalk is formed by the delta and b chains.

It localises to the cell inner membrane. It catalyses the reaction ATP + H2O + 4 H(+)(in) = ADP + phosphate + 5 H(+)(out). Its function is as follows. Produces ATP from ADP in the presence of a proton gradient across the membrane. The alpha chain is a regulatory subunit. The polypeptide is ATP synthase subunit alpha (Shewanella halifaxensis (strain HAW-EB4)).